A 175-amino-acid polypeptide reads, in one-letter code: MGRTLESKKQIVKKIEDLLDNSEMALVLDYKGLSTKEMSDLRSRLQQSDGVCKVTKNTLMRQAIKGKNSWTGLDSLLTGTNAFVLIKGDVGSAVKAVQAFQKETQKSETKGGLFEGKLLSQDEIKAIAKLPSKEALMGQIAGALNSITSKIAIGINEVPSGLARSLKQHSESGES.

Belongs to the universal ribosomal protein uL10 family. Part of the ribosomal stalk of the 50S ribosomal subunit. The N-terminus interacts with L11 and the large rRNA to form the base of the stalk. The C-terminus forms an elongated spine to which L12 dimers bind in a sequential fashion forming a multimeric L10(L12)X complex.

Its function is as follows. Forms part of the ribosomal stalk, playing a central role in the interaction of the ribosome with GTP-bound translation factors. The sequence is that of Large ribosomal subunit protein uL10 from Prochlorococcus marinus (strain NATL1A).